Reading from the N-terminus, the 427-residue chain is C4-dicarboxylate transport protein (427 aa).

9 helical membrane passes run isoleucine 5–histidine 25, leucine 44–methionine 64, isoleucine 76–valine 96, isoleucine 142–phenylalanine 162, valine 184–phenylalanine 206, leucine 222–alanine 242, isoleucine 307–phenylalanine 327, isoleucine 330–glycine 350, and isoleucine 352–isoleucine 372.

The protein belongs to the dicarboxylate/amino acid:cation symporter (DAACS) (TC 2.A.23) family.

It is found in the cell inner membrane. Responsible for the transport of dicarboxylates such as succinate, fumarate, and malate from the periplasm across the membrane. This is C4-dicarboxylate transport protein from Aeromonas salmonicida (strain A449).